A 133-amino-acid polypeptide reads, in one-letter code: Small ribosomal subunit protein uS11 (133 aa).

Belongs to the universal ribosomal protein uS11 family. In terms of assembly, part of the 30S ribosomal subunit.

In terms of biological role, located on the platform of the 30S subunit. The protein is Small ribosomal subunit protein uS11 of Pyrobaculum aerophilum (strain ATCC 51768 / DSM 7523 / JCM 9630 / CIP 104966 / NBRC 100827 / IM2).